A 973-amino-acid chain; its full sequence is Vacuolar membrane protease (973 aa).

The Cytoplasmic segment spans residues 1-15 (MARQYSRTNPLGFTP). Residues 16–36 (WPVTIITALVYLALVIPLLVV) form a helical membrane-spanning segment. Over 37–383 (QHVVPSAPGS…STLAVFELHT (347 aa)) the chain is Vacuolar. Asn52 and Asn115 each carry an N-linked (GlcNAc...) asparagine glycan. Zn(2+)-binding residues include His167 and Asp179. Glu213 acts as the Proton acceptor in catalysis. Zn(2+) contacts are provided by Glu214, Glu239, and His312. Residues 384 to 404 (LFALSVTLLIVAPLVLLATSI) traverse the membrane as a helical segment. Over 405-438 (ALVRADRMYLFRSTARVPGSDDFDEGVSLQGVRG) the chain is Cytoplasmic. The chain crosses the membrane as a helical span at residues 439 to 459 (FFRFPFLLVIPTGVAVGLAYL). At 460-469 (VTKINPYIIH) the chain is on the vacuolar side. A helical transmembrane segment spans residues 470-490 (SSEYAVWSMMISAWVFLAWFV). Residues 491–504 (SRVADFARPSAFHR) lie on the Cytoplasmic side of the membrane. Residues 505 to 525 (VYVLTWMFVAEWVLLVIATVY) form a helical membrane-spanning segment. Topologically, residues 526-529 (ENRY) are vacuolar. A helical transmembrane segment spans residues 530–550 (GLAGGYFVFFALSGTFLATWI). Residues 551 to 674 (SYLELFALPR…GLPKWTWVLQ (124 aa)) are Cytoplasmic-facing. Residues 572-623 (SRYASNHGSRLGTSSGEHGMDDAEDEEDDDGDDEDEARNVEEEPTESTSLLR) form a disordered region. Polar residues predominate over residues 574-587 (YASNHGSRLGTSSG). Residues 593 to 607 (DAEDEEDDDGDDEDE) are compositionally biased toward acidic residues. The chain crosses the membrane as a helical span at residues 675 to 695 (FLLSAPIVLILVGPLALLLTA). Over 696 to 708 (ALRQTAQDGSSPL) the chain is Vacuolar. The chain crosses the membrane as a helical span at residues 709–729 (FVYIAIAVLTTLLVTPLLPFI). Residues 730–735 (HRYTHH) are Cytoplasmic-facing. The helical transmembrane segment at 736 to 756 (IPLFLLLVFTGTLIYNLVAFP) threads the bilayer. The Vacuolar portion of the chain corresponds to 757–973 (FSPSNRLKLF…LVEGSRRFEV (217 aa)). 2 N-linked (GlcNAc...) asparagine glycosylation sites follow: Asn803 and Asn839.

Belongs to the peptidase M28 family. Requires Zn(2+) as cofactor.

The protein localises to the vacuole membrane. Its function is as follows. May be involved in vacuolar sorting and osmoregulation. This Aspergillus clavatus (strain ATCC 1007 / CBS 513.65 / DSM 816 / NCTC 3887 / NRRL 1 / QM 1276 / 107) protein is Vacuolar membrane protease.